A 137-amino-acid polypeptide reads, in one-letter code: Large ribosomal subunit protein bL21 (137 aa).

Residues methionine 1–serine 26 form a disordered region.

Belongs to the bacterial ribosomal protein bL21 family. In terms of assembly, part of the 50S ribosomal subunit. Contacts protein L20.

In terms of biological role, this protein binds to 23S rRNA in the presence of protein L20. The chain is Large ribosomal subunit protein bL21 from Parasynechococcus marenigrum (strain WH8102).